Here is a 602-residue protein sequence, read N- to C-terminus: Isocitrate dehydrogenase kinase/phosphatase (602 aa).

ATP contacts are provided by residues 325–331 and Lys346; that span reads APGIKGM. Residue Asp381 is part of the active site.

It belongs to the AceK family.

It is found in the cytoplasm. The catalysed reaction is L-seryl-[isocitrate dehydrogenase] + ATP = O-phospho-L-seryl-[isocitrate dehydrogenase] + ADP + H(+). Functionally, bifunctional enzyme which can phosphorylate or dephosphorylate isocitrate dehydrogenase (IDH) on a specific serine residue. This is a regulatory mechanism which enables bacteria to bypass the Krebs cycle via the glyoxylate shunt in response to the source of carbon. When bacteria are grown on glucose, IDH is fully active and unphosphorylated, but when grown on acetate or ethanol, the activity of IDH declines drastically concomitant with its phosphorylation. This Paracidovorax citrulli (strain AAC00-1) (Acidovorax citrulli) protein is Isocitrate dehydrogenase kinase/phosphatase.